We begin with the raw amino-acid sequence, 257 residues long: N-acetylglucosaminyldiphosphoundecaprenol N-acetyl-beta-D-mannosaminyltransferase (257 aa).

The protein belongs to the glycosyltransferase 26 family. TagA/TarA subfamily.

It catalyses the reaction UDP-N-acetyl-alpha-D-mannosamine + N-acetyl-alpha-D-glucosaminyl-di-trans,octa-cis-undecaprenyl diphosphate = N-acetyl-beta-D-mannosaminyl-(1-&gt;4)-N-acetyl-alpha-D-glucosaminyl di-trans,octa-cis-undecaprenyl diphosphate + UDP + H(+). Its pathway is cell wall biogenesis; poly(ribitol phosphate) teichoic acid biosynthesis. In terms of biological role, catalyzes the conversion of GlcNAc-PP-undecaprenol into ManNAc-GlcNAc-PP-undecaprenol, the first committed lipid intermediate in the de novo synthesis of teichoic acid. This is N-acetylglucosaminyldiphosphoundecaprenol N-acetyl-beta-D-mannosaminyltransferase from Bacillus spizizenii (strain ATCC 23059 / NRRL B-14472 / W23) (Bacillus subtilis subsp. spizizenii).